The following is an 813-amino-acid chain: Protein PPP4R3C1 (813 aa).

A disordered region spans residues 730 to 813 (NESESAIEGQ…PPPKRPNLST (84 aa)). Residues 777-788 (YDTDDENDDDPY) are compositionally biased toward acidic residues.

Belongs to the SMEK family.

This is Protein PPP4R3C1 from Mus musculus (Mouse).